The sequence spans 400 residues: Argininosuccinate synthase (400 aa).

Residue 9-17 (AYSGGLDTS) participates in ATP binding. L-citrulline is bound at residue tyrosine 87. Glycine 117 serves as a coordination point for ATP. Threonine 119, asparagine 123, and aspartate 124 together coordinate L-aspartate. Position 123 (asparagine 123) interacts with L-citrulline. Residues arginine 127, serine 176, serine 185, glutamate 261, and tyrosine 273 each contribute to the L-citrulline site.

This sequence belongs to the argininosuccinate synthase family. Type 1 subfamily. In terms of assembly, homotetramer.

The protein localises to the cytoplasm. The enzyme catalyses L-citrulline + L-aspartate + ATP = 2-(N(omega)-L-arginino)succinate + AMP + diphosphate + H(+). Its pathway is amino-acid biosynthesis; L-arginine biosynthesis; L-arginine from L-ornithine and carbamoyl phosphate: step 2/3. This is Argininosuccinate synthase from Pelodictyon phaeoclathratiforme (strain DSM 5477 / BU-1).